Reading from the N-terminus, the 263-residue chain is Tryptophan synthase alpha chain (263 aa).

Residues Glu51 and Asp62 each act as proton acceptor in the active site.

It belongs to the TrpA family. Tetramer of two alpha and two beta chains.

It catalyses the reaction (1S,2R)-1-C-(indol-3-yl)glycerol 3-phosphate + L-serine = D-glyceraldehyde 3-phosphate + L-tryptophan + H2O. It participates in amino-acid biosynthesis; L-tryptophan biosynthesis; L-tryptophan from chorismate: step 5/5. In terms of biological role, the alpha subunit is responsible for the aldol cleavage of indoleglycerol phosphate to indole and glyceraldehyde 3-phosphate. This Methanosarcina barkeri (strain Fusaro / DSM 804) protein is Tryptophan synthase alpha chain.